The following is a 210-amino-acid chain: NADH dehydrogenase [ubiquinone] iron-sulfur protein 8, mitochondrial (210 aa).

A mitochondrion-targeting transit peptide spans 1-34 (MRCLTMPTLLRALAQAAHTGPPGGRTLHSSAVAA). 4Fe-4S ferredoxin-type domains lie at 102–131 (RRYPSGEERCIACKLCEAVCPAQAITIEAE) and 141–170 (TRYDIDMTKCIYCGFCQEACPVDAIVEGPN). The [4Fe-4S] cluster site is built by Cys111, Cys114, Cys117, Cys121, Cys150, Cys153, Cys156, and Cys160.

Belongs to the complex I 23 kDa subunit family. In terms of assembly, core subunit of respiratory chain NADH dehydrogenase (Complex I) which is composed of 45 different subunits. This is a component of the iron-sulfur (IP) fragment of the enzyme. Interacts with RAB5IF. [4Fe-4S] cluster serves as cofactor.

The protein localises to the mitochondrion inner membrane. The enzyme catalyses a ubiquinone + NADH + 5 H(+)(in) = a ubiquinol + NAD(+) + 4 H(+)(out). Functionally, core subunit of the mitochondrial membrane respiratory chain NADH dehydrogenase (Complex I) which catalyzes electron transfer from NADH through the respiratory chain, using ubiquinone as an electron acceptor. Essential for the catalytic activity and assembly of complex I. This is NADH dehydrogenase [ubiquinone] iron-sulfur protein 8, mitochondrial (NDUFS8) from Macaca fascicularis (Crab-eating macaque).